Reading from the N-terminus, the 922-residue chain is Up-regulator of cell proliferation (922 aa).

Positions 1-20 (MASSGHSDLGEVTSEIKASE) are disordered. At Ser3 the chain carries Phosphoserine. Residues 680-920 (RSRLVVLSAL…NIQQLIELVR (241 aa)) enclose the VLIG-type G domain.

This sequence belongs to the TRAFAC class dynamin-like GTPase superfamily. Very large inducible GTPase (VLIG) family.

It is found in the cytoplasm. The protein localises to the nucleus. May be involved in cell cycle progression through the regulation of cyclin D1 expression. This chain is Up-regulator of cell proliferation (URGCP), found in Bos taurus (Bovine).